The primary structure comprises 432 residues: 2-oxoglutarate-dependent dioxygenase AOP2 (432 aa).

In terms of domain architecture, Fe2OG dioxygenase spans 281-378 (SGDDVEANDD…RYTAAIFTCP (98 aa)). Residues His-301, Asp-303, and His-358 each coordinate Fe cation. Arg-369 serves as a coordination point for 2-oxoglutarate.

This sequence belongs to the iron/ascorbate-dependent oxidoreductase family. The cofactor is Fe(2+).

In terms of biological role, 2-oxoglutarate-dependent dioxygenase involved in glucosinolates biosynthesis. Catalyzes the conversion of methylsulfinylalkyl glucosinolates to alkenyl glucosinolates. The polypeptide is 2-oxoglutarate-dependent dioxygenase AOP2 (AOP2) (Arabidopsis thaliana (Mouse-ear cress)).